We begin with the raw amino-acid sequence, 270 residues long: Aliphatic sulfonates import ATP-binding protein SsuB 3 (270 aa).

One can recognise an ABC transporter domain in the interval 17 to 238; it reads LAVQNLKKAF…ARGSHRLAAL (222 aa). ATP is bound at residue 49 to 56; that stretch reads GRSGCGKS.

Belongs to the ABC transporter superfamily. Aliphatic sulfonates importer (TC 3.A.1.17.2) family. In terms of assembly, the complex is composed of two ATP-binding proteins (SsuB), two transmembrane proteins (SsuC) and a solute-binding protein (SsuA).

It localises to the cell inner membrane. It catalyses the reaction ATP + H2O + aliphatic sulfonate-[sulfonate-binding protein]Side 1 = ADP + phosphate + aliphatic sulfonateSide 2 + [sulfonate-binding protein]Side 1.. Functionally, part of the ABC transporter complex SsuABC involved in aliphatic sulfonates import. Responsible for energy coupling to the transport system. This is Aliphatic sulfonates import ATP-binding protein SsuB 3 from Pseudomonas syringae pv. tomato (strain ATCC BAA-871 / DC3000).